The sequence spans 434 residues: Trigger factor (434 aa).

The PPIase FKBP-type domain occupies 160 to 245 (GDKAKINFVG…LNEVQAANLP (86 aa)).

Belongs to the FKBP-type PPIase family. Tig subfamily.

It localises to the cytoplasm. It carries out the reaction [protein]-peptidylproline (omega=180) = [protein]-peptidylproline (omega=0). Functionally, involved in protein export. Acts as a chaperone by maintaining the newly synthesized protein in an open conformation. Functions as a peptidyl-prolyl cis-trans isomerase. The sequence is that of Trigger factor from Shewanella woodyi (strain ATCC 51908 / MS32).